A 726-amino-acid polypeptide reads, in one-letter code: F-box protein COS111 (726 aa).

The region spanning phenylalanine 143 to threonine 194 is the F-box domain. Positions arginine 276–histidine 295 are disordered. Residues aspartate 284–histidine 295 are compositionally biased toward low complexity.

In terms of biological role, F-box protein probably involved in ubiquitin conjugation pathway. The protein is F-box protein COS111 (COS111) of Kluyveromyces lactis (strain ATCC 8585 / CBS 2359 / DSM 70799 / NBRC 1267 / NRRL Y-1140 / WM37) (Yeast).